The primary structure comprises 211 residues: Outer-membrane lipoprotein carrier protein (211 aa).

Positions 1-24 (MRNRILVSACAALAMFAMQAPAHA) are cleaved as a signal peptide.

This sequence belongs to the LolA family. As to quaternary structure, monomer.

The protein resides in the periplasm. Functionally, participates in the translocation of lipoproteins from the inner membrane to the outer membrane. Only forms a complex with a lipoprotein if the residue after the N-terminal Cys is not an aspartate (The Asp acts as a targeting signal to indicate that the lipoprotein should stay in the inner membrane). In Cupriavidus taiwanensis (strain DSM 17343 / BCRC 17206 / CCUG 44338 / CIP 107171 / LMG 19424 / R1) (Ralstonia taiwanensis (strain LMG 19424)), this protein is Outer-membrane lipoprotein carrier protein.